The primary structure comprises 296 residues: tRNA dimethylallyltransferase (296 aa).

9–16 is a binding site for ATP; that stretch reads GTTASGKS. 11–16 serves as a coordination point for substrate; it reads TASGKS. The interval 34 to 37 is interaction with substrate tRNA; sequence DSLA.

Belongs to the IPP transferase family. Monomer. The cofactor is Mg(2+).

The catalysed reaction is adenosine(37) in tRNA + dimethylallyl diphosphate = N(6)-dimethylallyladenosine(37) in tRNA + diphosphate. Its function is as follows. Catalyzes the transfer of a dimethylallyl group onto the adenine at position 37 in tRNAs that read codons beginning with uridine, leading to the formation of N6-(dimethylallyl)adenosine (i(6)A). The sequence is that of tRNA dimethylallyltransferase from Campylobacter curvus (strain 525.92).